The chain runs to 302 residues: uncharacterized protein (302 aa).

The next 9 membrane-spanning stretches (helical) occupy residues 3–23 (ILGV…SDWF), 39–59 (FVIG…LTSA), 77–97 (SCIC…PIIV), 106–126 (LVYL…FSWI), 128–148 (GVVL…NGSA), 163–183 (FSLV…ELFV), 199–219 (VIGF…VSLA), 227–247 (GMVL…ALAV), and 254–274 (LPAE…LYLF).

This sequence belongs to the Ca(2+):cation antiporter (CaCA) (TC 2.A.19) family.

The protein localises to the cell membrane. This is an uncharacterized protein from Methanocaldococcus jannaschii (strain ATCC 43067 / DSM 2661 / JAL-1 / JCM 10045 / NBRC 100440) (Methanococcus jannaschii).